Consider the following 402-residue polypeptide: Multidrug resistance protein MdtH (402 aa).

The Cytoplasmic portion of the chain corresponds to 1–12 (MSRVSQARNLGK). A helical membrane pass occupies residues 13–33 (YFLLIDNMLVVLGFFVVFPLI). Topologically, residues 34–98 (SIRFVDQMGW…GFATMGIAHE (65 aa)) are periplasmic. A helical transmembrane segment spans residues 99 to 116 (PWLLWFSCLLSGLGGTLF). The Cytoplasmic segment spans residues 117 to 138 (DPPRSALVVKLIRPQQRGRFFS). A helical membrane pass occupies residues 139–159 (LLMMQDSAGAVIGALLGSWLL). The Periplasmic portion of the chain corresponds to 160-164 (QYDFR). A helical transmembrane segment spans residues 165 to 185 (LVCATGAVLFVLCAAFNAWLL). The Cytoplasmic segment spans residues 186–213 (PAWKLSTVRTPVREGMTRVMRDKRFVTY). Residues 214–234 (VLTLAGYYMLAVQVMLMLPIM) form a helical membrane-spanning segment. The Periplasmic portion of the chain corresponds to 235–243 (VNDVAGAPS). A helical transmembrane segment spans residues 244-264 (AVKWMYAIEACLSLTLLYPIA). Topologically, residues 265 to 276 (RWSEKHFRLEHR) are cytoplasmic. Residues 277-297 (LMAGLLIMSLSMMPVGMVSGL) form a helical membrane-spanning segment. Over 298–299 (QQ) the chain is Periplasmic. The chain crosses the membrane as a helical span at residues 300–320 (LFTLICLFYIGSIIAEPARET). The Cytoplasmic segment spans residues 321-339 (LSASLADARARGSYMGCSR). Residues 340 to 360 (LGLAIGGAIGYIGGGWLFDLG) traverse the membrane as a helical segment. Over 361-367 (KSAHQPE) the chain is Periplasmic. A helical transmembrane segment spans residues 368–388 (LPWMMLGIIGIFTFLALGWQF). At 389-402 (SQKRAARRLLERDA) the chain is on the cytoplasmic side.

This sequence belongs to the major facilitator superfamily. DHA1 family. MdtH (TC 2.A.1.2.21) subfamily.

The protein resides in the cell inner membrane. Confers resistance to norfloxacin and enoxacin. The polypeptide is Multidrug resistance protein MdtH (Escherichia coli (strain SE11)).